The primary structure comprises 151 residues: Ribosome-binding factor A (151 aa).

A disordered region spans residues 120–151 (RSPKVVRDLDDTSSDDTSPDANTDTDKETDAE).

Belongs to the RbfA family. As to quaternary structure, monomer. Binds 30S ribosomal subunits, but not 50S ribosomal subunits or 70S ribosomes.

The protein localises to the cytoplasm. Functionally, one of several proteins that assist in the late maturation steps of the functional core of the 30S ribosomal subunit. Associates with free 30S ribosomal subunits (but not with 30S subunits that are part of 70S ribosomes or polysomes). Required for efficient processing of 16S rRNA. May interact with the 5'-terminal helix region of 16S rRNA. The sequence is that of Ribosome-binding factor A from Xanthobacter autotrophicus (strain ATCC BAA-1158 / Py2).